Reading from the N-terminus, the 390-residue chain is Lipoyl synthase, mitochondrial (390 aa).

The N-terminal 19 residues, 1–19 (MPTLLRILRPPRSPFTRCL), are a transit peptide targeting the mitochondrion. A disordered region spans residues 23-48 (ATPSSSGSSSRSKFTESLETGPGLDD). Residues cysteine 98, cysteine 103, cysteine 109, cysteine 136, cysteine 140, cysteine 143, and serine 350 each contribute to the [4Fe-4S] cluster site. Positions 119–339 (AEGRSAATAT…KEVAENLGFL (221 aa)) constitute a Radical SAM core domain.

It belongs to the radical SAM superfamily. Lipoyl synthase family. [4Fe-4S] cluster is required as a cofactor.

The protein localises to the mitochondrion. It carries out the reaction [[Fe-S] cluster scaffold protein carrying a second [4Fe-4S](2+) cluster] + N(6)-octanoyl-L-lysyl-[protein] + 2 oxidized [2Fe-2S]-[ferredoxin] + 2 S-adenosyl-L-methionine + 4 H(+) = [[Fe-S] cluster scaffold protein] + N(6)-[(R)-dihydrolipoyl]-L-lysyl-[protein] + 4 Fe(3+) + 2 hydrogen sulfide + 2 5'-deoxyadenosine + 2 L-methionine + 2 reduced [2Fe-2S]-[ferredoxin]. It functions in the pathway protein modification; protein lipoylation via endogenous pathway; protein N(6)-(lipoyl)lysine from octanoyl-[acyl-carrier-protein]: step 2/2. Its function is as follows. Catalyzes the radical-mediated insertion of two sulfur atoms into the C-6 and C-8 positions of the octanoyl moiety bound to the lipoyl domains of lipoate-dependent enzymes, thereby converting the octanoylated domains into lipoylated derivatives. The sequence is that of Lipoyl synthase, mitochondrial from Laccaria bicolor (strain S238N-H82 / ATCC MYA-4686) (Bicoloured deceiver).